A 664-amino-acid chain; its full sequence is MADLWDDNDDDDDILELVNRPPMSQMAVPIKPPESQAEQLMKAKGEVGVLRQKLSMLEKTLREHDDNQKKLESSLKSSHEEEVTKLKIELERLEDERKFMLLEQKHLFTPRNSSKSETTHETETAEPSPIENKRRRMEPVKEYVTLTQNFKVDDGSLFYDHLLNFKLLGSEHTVLEMLDHICTYKTDLILSPEHKIIKARLPLGPPIRSLIFKWKSIYTLDQLVDKTLEILAIAIKSVSVLPENKLAIPFLISLMHCTINFRHSATSVSSLKDVFQFITDFIISDPKFLKQPLHESPLDLDVSPDVFQYSMLDQLCMTYSFDVLETCIVILLNCNTRAQEIVLNDATIAENLIKCCNFTLSISYKPIMPIIVNVTEILLGIVELDGAENVWKGKWAVLFSKLIQNWERSLTFDSVSLNFAGLNRCCGDNSNHSMIDNIISLEEVRYLPMIIENEFEPLTFTALDNLEYWSIQIQINITLIMHKLLHRYRSTLCSLEFLQKTFSLFSSHQELLLTVFLDRDHISDIKRQELLSVLLKLIYFCWVSISDEYKRALRLDELTICLWRIVYGWPESTDELSTEWAALINPLKALALEEEKKYFDDAYDEDNLPAFMHSEELDIKRESAVSKFNNNSSWPLRDMAKYILESITTMDEADSLYVAMVSET.

A coiled-coil region spans residues 38-107 (EQLMKAKGEV…KFMLLEQKHL (70 aa)). Disordered stretches follow at residues 61-81 (LREHDDNQKKLESSLKSSHEE) and 109-132 (TPRNSSKSETTHETETAEPSPIEN).

As to quaternary structure, forms a complex with MEC1.

The protein resides in the cytoplasm. It localises to the nucleus. In terms of biological role, forms a complex with the serine/threonine kinase MEC1 which activates checkpoint signaling upon genotoxic stresses. The MEC1-LCD1 complex is recruited to DNA lesions in order to initiates the DNA repair by homologous recombination. Required for cell growth and meiotic recombination. The protein is DNA damage checkpoint protein LCD1 (LCD1) of Kluyveromyces lactis (strain ATCC 8585 / CBS 2359 / DSM 70799 / NBRC 1267 / NRRL Y-1140 / WM37) (Yeast).